Here is a 525-residue protein sequence, read N- to C-terminus: AP-4 complex accessory subunit Tepsin (525 aa).

Residues Arg-8–Pro-141 form the ENTH domain. The tract at residues Leu-139–Gly-229 is disordered. The span at Ser-193–Ser-225 shows a compositional bias: low complexity. 2 positions are modified to phosphoserine: Ser-333 and Ser-356. Positions Leu-355–Trp-465 are disordered. Residues Pro-393–Ser-412 are compositionally biased toward low complexity. Positions Ser-413 to Gly-429 are enriched in pro residues. Basic and acidic residues predominate over residues Ala-434–Arg-448. An interaction with AP4B1 region spans residues Arg-467 to Val-477. The tract at residues Ala-487–Ala-525 is disordered. An interaction with AP4E1 region spans residues Ser-515–Ala-525.

In terms of assembly, interacts with AP4B1 and AP4E1; the interaction is direct and mediates the association of TEPSIN with the adapter-like complex 4 (AP-4), a heterotetramer composed of AP4B1, AP4E1, AP4M1 and AP4S1.

The protein resides in the golgi apparatus. The protein localises to the trans-Golgi network membrane. It is found in the cytoplasmic vesicle. It localises to the cytoplasm. Its subcellular location is the cytosol. In terms of biological role, associates with the adapter-like complex 4 (AP-4) and may therefore play a role in vesicular trafficking of proteins at the trans-Golgi network. The polypeptide is AP-4 complex accessory subunit Tepsin (Homo sapiens (Human)).